Reading from the N-terminus, the 352-residue chain is Ferredoxin--NADP reductase 2 (352 aa).

The FAD site is built by Glu-36, Lys-44, Tyr-48, Ile-88, Leu-123, Asp-290, and Ser-331.

This sequence belongs to the ferredoxin--NADP reductase type 2 family. As to quaternary structure, homodimer. FAD serves as cofactor.

The catalysed reaction is 2 reduced [2Fe-2S]-[ferredoxin] + NADP(+) + H(+) = 2 oxidized [2Fe-2S]-[ferredoxin] + NADPH. The sequence is that of Ferredoxin--NADP reductase 2 from Exiguobacterium sibiricum (strain DSM 17290 / CCUG 55495 / CIP 109462 / JCM 13490 / 255-15).